The primary structure comprises 300 residues: Regulatory protein NocR (300 aa).

Residues 1–59 (MIQSRQLEAFRAVMLTGGMTSAANLVRITQPAISRLIRDLEEEIGISLFERTGNRLRPT) enclose the HTH lysR-type domain. Positions 19–38 (MTSAANLVRITQPAISRLIR) form a DNA-binding region, H-T-H motif.

It belongs to the LysR transcriptional regulatory family.

In terms of biological role, positive regulatory protein for the noc operon involved in nopaline catabolism and uptake. The chain is Regulatory protein NocR (nocR) from Agrobacterium fabrum (strain C58 / ATCC 33970) (Agrobacterium tumefaciens (strain C58)).